The chain runs to 95 residues: Selenoprotein K (95 aa).

The chain crosses the membrane as a helical span at residues 20–42; the sequence is LSFLTDMFWGITDFIVMFFQSII. The disordered stretch occupies residues 48-95; it reads RRGCQNSSSRTRFDDGRGPPGNPRRRMGRIDHNSGPNAPPMSGGGUGR. Residue Sec93 is a non-standard amino acid, selenocysteine.

This sequence belongs to the selenoprotein K family.

The protein resides in the endoplasmic reticulum membrane. It is found in the cell membrane. Required for Ca(2+) flux in immune cells and plays a role in T-cell proliferation and in T-cell and neutrophil migration. Involved in endoplasmic reticulum-associated degradation (ERAD) of soluble glycosylated proteins. Required for cell surface expression of CD36 and involved in macrophage uptake of low-density lipoprotein and in foam cell formation. Required for palmitoylation. The sequence is that of Selenoprotein K (selenok) from Xenopus tropicalis (Western clawed frog).